Here is a 330-residue protein sequence, read N- to C-terminus: Putative protein DDB_G0285185 (330 aa).

Positions 212 to 240 are disordered; it reads NKLQNQVQSSPKLSSPITKNKEQIVSTTS. A compositionally biased stretch (polar residues) spans 214 to 240; that stretch reads LQNQVQSSPKLSSPITKNKEQIVSTTS.

This chain is Putative protein DDB_G0285185, found in Dictyostelium discoideum (Social amoeba).